The chain runs to 1030 residues: ADAMTS-like protein 4 (1030 aa).

The first 24 residues, 1 to 24 (MELWLGRLWLYVMLLLLLLQLCQD), serve as a signal peptide directing secretion. The TSP type-1 1 domain occupies 47-91 (GPWGRWASCSQPCGVGVQRRSRTCELHPALSLPPRPPRHPEAPQP). Disordered regions lie at residues 73–150 (HPAL…KPGM) and 168–306 (LAHK…LPLT). Polar residues-rich tracts occupy residues 176-186 (KDSSTAEETLP), 211-237 (QSRS…SSAP), and 245-257 (PTSS…SFQG). Asn451 and Asn731 each carry an N-linked (GlcNAc...) asparagine glycan. TSP type-1 domains lie at 681 to 740 (CPPY…QLRL), 741 to 800 (CGHW…GPCT), 803 to 865 (WFYS…GPCE), 866 to 925 (KTWR…QGQA), and 926 to 982 (CEDQ…QPCN). Positions 985–1022 (PDDQCKDSSPHCPLVVQARLCVYPYYTATCCRSCAHVL) constitute a PLAC domain.

In terms of assembly, interacts with CTSB. Interacts with FBN1. In terms of processing, glycosylated. Can be O-fucosylated by POFUT2 on a serine or a threonine residue found within the consensus sequence C1-X(2)-(S/T)-C2-G of the TSP type-1 repeat domains where C1 and C2 are the first and second cysteine residue of the repeat, respectively. Fucosylated repeats can then be further glycosylated by the addition of a beta-1,3-glucose residue by the glucosyltransferase, B3GALTL. Fucosylation mediates the efficient secretion of ADAMTS family members. Can also be C-glycosylated with one or two mannose molecules on tryptophan residues within the consensus sequence W-X-X-W of the TPRs, and N-glycosylated. These other glycosylations can also facilitate secretion.

It localises to the secreted. The protein resides in the extracellular space. Its subcellular location is the extracellular matrix. Positive regulation of apoptosis. May facilitate FBN1 microfibril biogenesis. The polypeptide is ADAMTS-like protein 4 (Rattus norvegicus (Rat)).